The following is a 185-amino-acid chain: Pyridoxal 5'-phosphate synthase subunit PdxT (185 aa).

46-48 (GES) contacts L-glutamine. Cys78 functions as the Nucleophile in the catalytic mechanism. L-glutamine is bound by residues Arg106 and 132–133 (IR). Residues His168 and Glu170 each act as charge relay system in the active site.

Belongs to the glutaminase PdxT/SNO family. In the presence of PdxS, forms a dodecamer of heterodimers. Only shows activity in the heterodimer.

It carries out the reaction aldehydo-D-ribose 5-phosphate + D-glyceraldehyde 3-phosphate + L-glutamine = pyridoxal 5'-phosphate + L-glutamate + phosphate + 3 H2O + H(+). The enzyme catalyses L-glutamine + H2O = L-glutamate + NH4(+). The protein operates within cofactor biosynthesis; pyridoxal 5'-phosphate biosynthesis. Catalyzes the hydrolysis of glutamine to glutamate and ammonia as part of the biosynthesis of pyridoxal 5'-phosphate. The resulting ammonia molecule is channeled to the active site of PdxS. In Corynebacterium diphtheriae (strain ATCC 700971 / NCTC 13129 / Biotype gravis), this protein is Pyridoxal 5'-phosphate synthase subunit PdxT.